A 140-amino-acid chain; its full sequence is Acyl carrier protein 1, chloroplastic (140 aa).

The transit peptide at M1–C56 directs the protein to the chloroplast. One can recognise a Carrier domain in the interval P60 to M135. An O-(pantetheine 4'-phosphoryl)serine modification is found at S95.

Belongs to the acyl carrier protein (ACP) family. In terms of processing, 4'-phosphopantetheine is transferred from CoA to a specific serine of apo-ACP by acpS. This modification is essential for activity because fatty acids are bound in thioester linkage to the sulfhydryl of the prosthetic group.

The protein localises to the plastid. It is found in the chloroplast. It functions in the pathway lipid metabolism; fatty acid biosynthesis. In terms of biological role, carrier of the growing fatty acid chain in fatty acid biosynthesis. In Cuphea lanceolata (Cigar flower), this protein is Acyl carrier protein 1, chloroplastic (ACL1.1).